Consider the following 366-residue polypeptide: Alcohol dehydrogenase (366 aa).

Positions 41, 62, 63, and 167 each coordinate Zn(2+).

Belongs to the zinc-containing alcohol dehydrogenase family. In terms of assembly, homotetramer. Zn(2+) serves as cofactor.

It carries out the reaction a primary alcohol + NAD(+) = an aldehyde + NADH + H(+). It catalyses the reaction a secondary alcohol + NAD(+) = a ketone + NADH + H(+). The catalysed reaction is (R,R)-butane-2,3-diol + NAD(+) = (R)-acetoin + NADH + H(+). The enzyme catalyses an aldehyde + NAD(+) + H2O = a carboxylate + NADH + 2 H(+). In terms of biological role, multifunctional alcohol dehydrogenase exhibiting NAD(+)-dependent dehydrogenase activities for 2,3-butanediol, ethanol and acetaldehyde, and reductase activities for acetoin (NADH-dependent), and diacetyl and acetaldehyde (independently of whether NADH or NADPH is the reductant). The rate of oxidation of 2,3-butanediol is much higher than for the oxidation of ethanol. Has acetaldehyde dehydrogenase activity leading to acetate formation. May function in the release of excess reducing power in the absence of exogenous hydrogen acceptors such as oxygen. The sequence is that of Alcohol dehydrogenase (adh) from Cupriavidus necator (strain ATCC 17699 / DSM 428 / KCTC 22496 / NCIMB 10442 / H16 / Stanier 337) (Ralstonia eutropha).